The following is a 595-amino-acid chain: Probable xyloglucan glycosyltransferase 9 (595 aa).

The next 2 membrane-spanning stretches (helical) occupy residues 30–50 (AFVV…INGW) and 77–97 (ATYV…LFLI). The active site involves aspartate 177. Positions 236 and 238 each coordinate substrate. Aspartate 330 is an active-site residue. 4 helical membrane passes run 408–428 (LILP…TMFV), 433–453 (LPDW…ILPS), 545–564 (IYKK…ARSL), and 570–590 (IHFY…LDLI).

Belongs to the glycosyltransferase 2 family. Plant cellulose synthase-like C subfamily.

It localises to the golgi apparatus membrane. Functionally, probable beta-1,4-glucan synthase rather involved in the synthesis of the xyloglucan backbone than cellulose. Seems to work simultaneously with xyloglucan 6-xylosyltransferase. Xyloglucan is a noncellulosic polysaccharides of plant cell wall and consists of a glucan backbone substituted by xylose, galactose and fucose. The protein is Probable xyloglucan glycosyltransferase 9 (CSLC9) of Oryza sativa subsp. japonica (Rice).